The chain runs to 955 residues: Centrosomal protein of 112 kDa (955 aa).

Positions 277 to 954 (QKHDADVQKI…QEELTTYQGR (678 aa)) form a coiled coil.

The protein resides in the cytoplasm. Its subcellular location is the cytoskeleton. The protein localises to the microtubule organizing center. It is found in the centrosome. This is Centrosomal protein of 112 kDa (CEP112) from Homo sapiens (Human).